Consider the following 54-residue polypeptide: Apelin receptor early endogenous ligand (54 aa).

An N-terminal signal peptide occupies residues 1–25 (MRFQPLFWVFFIFAMSLLFITEEKS).

The protein belongs to the Elabela/Toddler family. Interacts with APLNR.

It localises to the secreted. The protein resides in the extracellular space. In terms of biological role, peptide hormone that functions as endogenous ligand for the G-protein-coupled apelin receptor (APLNR/APJ), that plays a role in the regulation of normal cardiovascular function and fluid homeostasis. Functions as a balanced agonist activating both G(i) protein pathway and beta-arrestin pathway of APLNR. Downstream G proteins activation, apelin can inhibit cAMP production and activate key intracellular effectors such as ERKs. On the other hand, APLNR activation induces beta-arrestin recruitment to the membrane leading to desensitization and internalization of the receptor. Required for mesendodermal differentiation, blood vessels formation and heart morphogenesis during early development and for adult cardiovascular homeostasis. Acts as a motogen by promoting mesendodermal cell migration during gastrulation by binding and activating APLNR. Acts as an early embryonic regulator of cellular movement with a role in migration and development of cardiac progenitor cells. May act as a chemoattractant for the activation of angioblast migration toward the embryonic midline, i.e. the position of the future vessel formation, during vasculogenesis. Positively regulates sinus venosus (SV)-derived endothelial cells migration into the developing heart to promote coronary blood vessel sprouting. Plays a role in placental vascular development; promotes placental trophoblast invasion and spiral artery remodeling in the uterus. Involved in the regulation of maternal cardiovascular homeostasis to prevent gestational hypertension and for potent cardioprotective functions during heart failure. Mediates myocardial contractility in an ERK1/2-dependent manner. The protein is Apelin receptor early endogenous ligand of Rattus norvegicus (Rat).